We begin with the raw amino-acid sequence, 264 residues long: MNATTPAHRPQLHIDTRGQGPDLVMLHGWGVNSAVFTPLHEQLSEYRVHYVDLPGFGLSQPIAGDLSTWVDALIHALPANAIWAGWSLGGLVATQAAIRYPSHIQGLITIASSPCFMAREEEAWPGIPPQVLSMFGEQLGQNLPKTIERFLAIQAMGSETAKDDIKQLRDLVLARPLPDAAALTQGLDMLNQIDLRPQLSAIQQPWLRIWGRLDGLVPKRVQPQMPTANHITDVMLAKASHAPFVSHMEEFLQAITPWLAQFKD.

The AB hydrolase-1 domain occupies 23–244 (LVMLHGWGVN…MLAKASHAPF (222 aa)). Substrate contacts are provided by residues W29, 87 to 88 (SL), and 150 to 154 (FLAIQ). Catalysis depends on S87, which acts as the Nucleophile. Catalysis depends on residues D214 and H241. Residue H241 coordinates substrate.

The protein belongs to the AB hydrolase superfamily. Carboxylesterase BioH family. As to quaternary structure, monomer.

It localises to the cytoplasm. The enzyme catalyses 6-carboxyhexanoyl-[ACP] methyl ester + H2O = 6-carboxyhexanoyl-[ACP] + methanol + H(+). The protein operates within cofactor biosynthesis; biotin biosynthesis. The physiological role of BioH is to remove the methyl group introduced by BioC when the pimeloyl moiety is complete. It allows to synthesize pimeloyl-ACP via the fatty acid synthetic pathway through the hydrolysis of the ester bonds of pimeloyl-ACP esters. The sequence is that of Pimeloyl-[acyl-carrier protein] methyl ester esterase from Shewanella sp. (strain MR-7).